A 189-amino-acid chain; its full sequence is GTP cyclohydrolase 1 (189 aa).

Residues Cys78, His81, and Cys150 each coordinate Zn(2+).

This sequence belongs to the GTP cyclohydrolase I family. In terms of assembly, homomer.

The catalysed reaction is GTP + H2O = 7,8-dihydroneopterin 3'-triphosphate + formate + H(+). It participates in cofactor biosynthesis; 7,8-dihydroneopterin triphosphate biosynthesis; 7,8-dihydroneopterin triphosphate from GTP: step 1/1. In Listeria monocytogenes serotype 4a (strain HCC23), this protein is GTP cyclohydrolase 1.